The sequence spans 249 residues: MIVKYGGNAMKSLDLRRAVARELGTLRGAMPLVVVHGGGPVIERELAARGVASEFIGGLRVTTPEAMDVVEMALCQLNKQLSQDIGQAVGLMGRDDELLRAEVLDPQLGRVGRVTGVNAGLLRTLLGAGLTPVVGCVAVGEDGEALNVNADTVAGAVAGALGEGAVFLTDVDGVYRAYPDPDSRAAQLTRAEVEDGLAAGWIAGGMIPKVRAALDALGRGAPFAIIASGMTAGVLAQAARGEAGTRIVP.

Residues 38-39 (GG), Arg-60, and Asn-147 contribute to the substrate site.

The protein belongs to the acetylglutamate kinase family. ArgB subfamily.

The protein localises to the cytoplasm. The catalysed reaction is N-acetyl-L-glutamate + ATP = N-acetyl-L-glutamyl 5-phosphate + ADP. It participates in amino-acid biosynthesis; L-arginine biosynthesis; N(2)-acetyl-L-ornithine from L-glutamate: step 2/4. Catalyzes the ATP-dependent phosphorylation of N-acetyl-L-glutamate. This Deinococcus radiodurans (strain ATCC 13939 / DSM 20539 / JCM 16871 / CCUG 27074 / LMG 4051 / NBRC 15346 / NCIMB 9279 / VKM B-1422 / R1) protein is Acetylglutamate kinase.